Here is a 1452-residue protein sequence, read N- to C-terminus: ABC multidrug transporter A (1452 aa).

A disordered region spans residues 1–20 (MNESHEAGKNSSTNVEEREE). Residues Asn-2, Asn-10, Asn-228, Asn-287, and Asn-311 are each glycosylated (N-linked (GlcNAc...) asparagine). The region spanning 110 to 363 (LKTLSLARIA…FLQMGFVCPD (254 aa)) is the ABC transporter 1 domain. The next 6 membrane-spanning stretches (helical) occupy residues 474 to 494 (VTIS…SIFY), 508 to 528 (ALLF…MLTL), 554 to 574 (MIMD…VLYF), 583 to 603 (GAFF…SMFF), 616 to 636 (VLPF…FAIP), and 725 to 745 (IGVI…ATDF). One can recognise an ABC transporter 2 domain in the interval 802 to 1044 (FQWKDVCFDI…ILIDYFVRNG (243 aa)). Position 838–845 (838–845 (GVSGAGKT)) interacts with ATP. 5 consecutive transmembrane segments (helical) span residues 1153–1173 (ALCV…PNTI), 1183–1203 (IFML…HFVA), 1223–1243 (FLIA…VLMF), 1271–1291 (LMIW…IAAF), and 1297–1317 (AGNL…VLAT). N-linked (GlcNAc...) asparagine glycans are attached at residues Asn-1350, Asn-1365, and Asn-1391. Residues 1418–1438 (FGLMWVFIVFNIFAACSLYWW) form a helical membrane-spanning segment.

The protein belongs to the ABC transporter superfamily. ABCG family. PDR (TC 3.A.1.205) subfamily.

It is found in the membrane. In terms of biological role, ABC transporter that seems not to be involved in the efflux of toxic substances, at least not the classical compounds such as itraconazole, amphotericin B, voriconazole, posaconazole, ravuconazole, or echinocandins. The polypeptide is ABC multidrug transporter A (Aspergillus fumigatus (Neosartorya fumigata)).